The chain runs to 99 residues: Virion membrane protein OPG135 (99 aa).

The N-terminal stretch at 1 to 22 (MSCYTAILKSVGGLALFQVANG) is a signal peptide. Residues 23-45 (AIDLCRHFFMYFCEQKLRPNSFW) are Intravirion-facing. Residues 46-66 (FVVVRAIASMIMYLVLGIALL) traverse the membrane as a helical segment. The Virion surface segment spans residues 67–83 (YISEQDDKKNTNNDGSN). Basic and acidic residues predominate over residues 73–89 (DKKNTNNDGSNNDKRNE). The segment at 73–99 (DKKNTNNDGSNNDKRNESSINSNSSPK) is disordered. A glycan (N-linked (GlcNAc...) asparagine; by host) is linked at Asn-88. Over residues 90 to 99 (SSINSNSSPK) the composition is skewed to polar residues.

The protein belongs to the oerthopoxvirus OPG135 family.

Its subcellular location is the virion membrane. It localises to the host cytoplasm. Functionally, envelope protein. Required for an early step in virion morphogenesis. The polypeptide is Virion membrane protein OPG135 (OPG135) (Homo sapiens (Human)).